A 109-amino-acid chain; its full sequence is Nucleoid-associated protein MS1507 (109 aa).

The disordered stretch occupies residues 1–21 (MFGKGGLGNLMKQAQQMQERM).

The protein belongs to the YbaB/EbfC family. As to quaternary structure, homodimer.

Its subcellular location is the cytoplasm. The protein localises to the nucleoid. Binds to DNA and alters its conformation. May be involved in regulation of gene expression, nucleoid organization and DNA protection. In Mannheimia succiniciproducens (strain KCTC 0769BP / MBEL55E), this protein is Nucleoid-associated protein MS1507.